Reading from the N-terminus, the 685-residue chain is Polyphosphate kinase (685 aa).

Residue asparagine 45 coordinates ATP. 2 residues coordinate Mg(2+): arginine 375 and arginine 405. The Phosphohistidine intermediate role is filled by histidine 435. ATP contacts are provided by tyrosine 468, arginine 564, and histidine 592.

The protein belongs to the polyphosphate kinase 1 (PPK1) family. It depends on Mg(2+) as a cofactor. In terms of processing, an intermediate of this reaction is the autophosphorylated ppk in which a phosphate is covalently linked to a histidine residue through a N-P bond.

The catalysed reaction is [phosphate](n) + ATP = [phosphate](n+1) + ADP. In terms of biological role, catalyzes the reversible transfer of the terminal phosphate of ATP to form a long-chain polyphosphate (polyP). This is Polyphosphate kinase from Neisseria meningitidis serogroup B (strain ATCC BAA-335 / MC58).